Consider the following 313-residue polypeptide: Homoserine O-succinyltransferase (313 aa).

Residue Cys142 is the Acyl-thioester intermediate of the active site. The substrate site is built by Lys163 and Ser192. The Proton acceptor role is filled by His235. Glu237 is a catalytic residue. Arg249 provides a ligand contact to substrate.

The protein belongs to the MetA family.

It localises to the cytoplasm. It catalyses the reaction L-homoserine + succinyl-CoA = O-succinyl-L-homoserine + CoA. It functions in the pathway amino-acid biosynthesis; L-methionine biosynthesis via de novo pathway; O-succinyl-L-homoserine from L-homoserine: step 1/1. Its function is as follows. Transfers a succinyl group from succinyl-CoA to L-homoserine, forming succinyl-L-homoserine. The sequence is that of Homoserine O-succinyltransferase from Vibrio vulnificus (strain YJ016).